A 293-amino-acid polypeptide reads, in one-letter code: Bifunctional protein FolD (293 aa).

NADP(+) is bound by residues 165-167, Ser190, and Ile231; that span reads GRS.

The protein belongs to the tetrahydrofolate dehydrogenase/cyclohydrolase family. Homodimer.

The enzyme catalyses (6R)-5,10-methylene-5,6,7,8-tetrahydrofolate + NADP(+) = (6R)-5,10-methenyltetrahydrofolate + NADPH. The catalysed reaction is (6R)-5,10-methenyltetrahydrofolate + H2O = (6R)-10-formyltetrahydrofolate + H(+). It participates in one-carbon metabolism; tetrahydrofolate interconversion. Functionally, catalyzes the oxidation of 5,10-methylenetetrahydrofolate to 5,10-methenyltetrahydrofolate and then the hydrolysis of 5,10-methenyltetrahydrofolate to 10-formyltetrahydrofolate. The protein is Bifunctional protein FolD of Synechococcus sp. (strain CC9311).